The sequence spans 153 residues: SsrA-binding protein (153 aa).

Positions A133–Q143 are enriched in basic and acidic residues. The tract at residues A133–Y153 is disordered. A compositionally biased stretch (low complexity) spans M144–Y153.

It belongs to the SmpB family.

It is found in the cytoplasm. Functionally, required for rescue of stalled ribosomes mediated by trans-translation. Binds to transfer-messenger RNA (tmRNA), required for stable association of tmRNA with ribosomes. tmRNA and SmpB together mimic tRNA shape, replacing the anticodon stem-loop with SmpB. tmRNA is encoded by the ssrA gene; the 2 termini fold to resemble tRNA(Ala) and it encodes a 'tag peptide', a short internal open reading frame. During trans-translation Ala-aminoacylated tmRNA acts like a tRNA, entering the A-site of stalled ribosomes, displacing the stalled mRNA. The ribosome then switches to translate the ORF on the tmRNA; the nascent peptide is terminated with the 'tag peptide' encoded by the tmRNA and targeted for degradation. The ribosome is freed to recommence translation, which seems to be the essential function of trans-translation. In Protochlamydia amoebophila (strain UWE25), this protein is SsrA-binding protein.